The sequence spans 433 residues: LanC-like protein GCL1 (433 aa).

The disordered stretch occupies residues 1 to 22 (MSSSVDFVTEQGRCGDDGNGAG).

This sequence belongs to the LanC-like protein family.

May play a role in signaling. May be not involved in abscisic acid (ABA) signaling. The protein is LanC-like protein GCL1 (GCL1) of Arabidopsis thaliana (Mouse-ear cress).